Reading from the N-terminus, the 201-residue chain is Holliday junction branch migration complex subunit RuvA (201 aa).

The segment at 1 to 63 is domain I; that stretch reads MYDYIKGTVT…EDNISLFGFQ (63 aa). The interval 64-142 is domain II; sequence TTEERYLFKK…DVVASEIVYV (79 aa). Positions 143–153 are flexible linker; sequence APENDMVAGLS. The tract at residues 153 to 201 is domain III; the sequence is SPQLEEAVLALEALGYSTRELKKVIPKLSKEEDLTSDAYIKLALQLMTK.

It belongs to the RuvA family. In terms of assembly, homotetramer. Forms an RuvA(8)-RuvB(12)-Holliday junction (HJ) complex. HJ DNA is sandwiched between 2 RuvA tetramers; dsDNA enters through RuvA and exits via RuvB. An RuvB hexamer assembles on each DNA strand where it exits the tetramer. Each RuvB hexamer is contacted by two RuvA subunits (via domain III) on 2 adjacent RuvB subunits; this complex drives branch migration. In the full resolvosome a probable DNA-RuvA(4)-RuvB(12)-RuvC(2) complex forms which resolves the HJ.

The protein resides in the cytoplasm. In terms of biological role, the RuvA-RuvB-RuvC complex processes Holliday junction (HJ) DNA during genetic recombination and DNA repair, while the RuvA-RuvB complex plays an important role in the rescue of blocked DNA replication forks via replication fork reversal (RFR). RuvA specifically binds to HJ cruciform DNA, conferring on it an open structure. The RuvB hexamer acts as an ATP-dependent pump, pulling dsDNA into and through the RuvAB complex. HJ branch migration allows RuvC to scan DNA until it finds its consensus sequence, where it cleaves and resolves the cruciform DNA. The sequence is that of Holliday junction branch migration complex subunit RuvA from Listeria monocytogenes serotype 4b (strain CLIP80459).